The chain runs to 170 residues: Acireductone dioxygenase (170 aa).

Fe(2+) contacts are provided by His99, His101, Glu105, and His144. The Ni(2+) site is built by His99, His101, Glu105, and His144.

Belongs to the acireductone dioxygenase (ARD) family. In terms of assembly, monomer. Fe(2+) serves as cofactor. Requires Ni(2+) as cofactor.

It catalyses the reaction 1,2-dihydroxy-5-(methylsulfanyl)pent-1-en-3-one + O2 = 3-(methylsulfanyl)propanoate + CO + formate + 2 H(+). It carries out the reaction 1,2-dihydroxy-5-(methylsulfanyl)pent-1-en-3-one + O2 = 4-methylsulfanyl-2-oxobutanoate + formate + 2 H(+). Its pathway is amino-acid biosynthesis; L-methionine biosynthesis via salvage pathway; L-methionine from S-methyl-5-thio-alpha-D-ribose 1-phosphate: step 5/6. Catalyzes 2 different reactions between oxygen and the acireductone 1,2-dihydroxy-3-keto-5-methylthiopentene (DHK-MTPene) depending upon the metal bound in the active site. Fe-containing acireductone dioxygenase (Fe-ARD) produces formate and 2-keto-4-methylthiobutyrate (KMTB), the alpha-ketoacid precursor of methionine in the methionine recycle pathway. Ni-containing acireductone dioxygenase (Ni-ARD) produces methylthiopropionate, carbon monoxide and formate, and does not lie on the methionine recycle pathway. The sequence is that of Acireductone dioxygenase from Bacillus thuringiensis (strain Al Hakam).